A 463-amino-acid polypeptide reads, in one-letter code: Fumarate hydratase class II (463 aa).

Residues 98 to 100, 129 to 132, 139 to 141, and Thr-187 each bind substrate; these read SGT, HPND, and SSN. A disordered region spans residues 121-141; it reads KKGGKSPVHPNDHVNKGQSSN. His-188 (proton donor/acceptor) is an active-site residue. Ser-318 is a catalytic residue. Substrate contacts are provided by residues Ser-319 and 324-326; that span reads KVN.

The protein belongs to the class-II fumarase/aspartase family. Fumarase subfamily. In terms of assembly, homotetramer.

The protein localises to the cytoplasm. The enzyme catalyses (S)-malate = fumarate + H2O. It functions in the pathway carbohydrate metabolism; tricarboxylic acid cycle; (S)-malate from fumarate: step 1/1. Involved in the TCA cycle. Catalyzes the stereospecific interconversion of fumarate to L-malate. This is Fumarate hydratase class II from Rickettsia conorii (strain ATCC VR-613 / Malish 7).